A 113-amino-acid chain; its full sequence is Cell wall protein PGA59 (113 aa).

The signal sequence occupies residues 1-18 (MQFSSAIILSAVAGSALA). N22 and N80 each carry an N-linked (GlcNAc...) asparagine glycan. G92 carries the GPI-anchor amidated glycine lipid modification. A propeptide spans 93–113 (AAAANAVPAVAAGLLALGAFM) (removed in mature form).

This sequence belongs to the HWP1 family. N- and O-glycosylated. In terms of processing, the GPI-anchor is attached to the protein in the endoplasmic reticulum and serves to target the protein to the cell surface. There, the glucosamine-inositol phospholipid moiety is cleaved off and the GPI-modified mannoprotein is covalently attached via its lipidless GPI glycan remnant to the 1,6-beta-glucan of the outer cell wall layer.

The protein resides in the secreted. Its subcellular location is the cell wall. It is found in the membrane. Cell wall protein necessary for cell wall integrity. Plays only a minor role in hyphal morphogenesis and is not critical to biofilm formation. The sequence is that of Cell wall protein PGA59 (PGA59) from Candida albicans (strain SC5314 / ATCC MYA-2876) (Yeast).